A 359-amino-acid chain; its full sequence is Guanine nucleotide-binding protein subunit alpha-11 (359 aa).

2 S-palmitoyl cysteine lipidation sites follow: Cys9 and Cys10. The G-alpha domain maps to 38 to 359; the sequence is RELKLLLLGT…QLNLKEYNLV (322 aa). The segment at 41–54 is G1 motif; sequence KLLLLGTGESGKST. Residues 46–53 and 180–183 each bind GTP; these read GTGESGKS and LRVR. Residue Ser53 participates in Mg(2+) binding. The tract at residues 178 to 186 is G2 motif; sequence DVLRVRVPT. Thr186 is a binding site for Mg(2+). Positions 201-210 are G3 motif; the sequence is FRMVDVGGQR. Residues 270 to 277 form a G4 motif region; the sequence is ILFLNKKD. Residues 274–277 and Ala331 each bind GTP; that span reads NKKD. Residues 329 to 334 form a G5 motif region; the sequence is TCATDT.

It belongs to the G-alpha family. G(q) subfamily. In terms of assembly, g proteins are composed of 3 units; alpha, beta and gamma. The alpha chain contains the guanine nucleotide binding site. Interacts with RGS22. Interacts with NTSR1.

The protein resides in the cell membrane. It is found in the cytoplasm. The enzyme catalyses GTP + H2O = GDP + phosphate + H(+). Functionally, guanine nucleotide-binding proteins (G proteins) function as transducers downstream of G protein-coupled receptors (GPCRs) in numerous signaling cascades. The alpha chain contains the guanine nucleotide binding site and alternates between an active, GTP-bound state and an inactive, GDP-bound state. Signaling by an activated GPCR promotes GDP release and GTP binding. The alpha subunit has a low GTPase activity that converts bound GTP to GDP, thereby terminating the signal. Both GDP release and GTP hydrolysis are modulated by numerous regulatory proteins. Signaling is mediated via phospholipase C-beta-dependent inositol lipid hydrolysis for signal propagation: activates phospholipase C-beta: following GPCR activation, GNA11 activates PLC-beta (PLCB1, PLCB2, PLCB3 or PLCB4), leading to production of diacylglycerol (DAG) and inositol 1,4,5-trisphosphate (IP3). Transduces FFAR4 signaling in response to long-chain fatty acids (LCFAs). Together with GNAQ, required for heart development. In the respiratory epithelium, transmits OXGR1-dependent signals that lead to downstream intracellular Ca(2+) release and mucocilliary clearance of airborne pathogens. The protein is Guanine nucleotide-binding protein subunit alpha-11 (GNA11) of Bos taurus (Bovine).